Here is a 256-residue protein sequence, read N- to C-terminus: Imidazole glycerol phosphate synthase subunit HisF (256 aa).

Residues Asp11 and Asp130 contribute to the active site.

This sequence belongs to the HisA/HisF family. As to quaternary structure, heterodimer of HisH and HisF.

It localises to the cytoplasm. The enzyme catalyses 5-[(5-phospho-1-deoxy-D-ribulos-1-ylimino)methylamino]-1-(5-phospho-beta-D-ribosyl)imidazole-4-carboxamide + L-glutamine = D-erythro-1-(imidazol-4-yl)glycerol 3-phosphate + 5-amino-1-(5-phospho-beta-D-ribosyl)imidazole-4-carboxamide + L-glutamate + H(+). It participates in amino-acid biosynthesis; L-histidine biosynthesis; L-histidine from 5-phospho-alpha-D-ribose 1-diphosphate: step 5/9. Functionally, IGPS catalyzes the conversion of PRFAR and glutamine to IGP, AICAR and glutamate. The HisF subunit catalyzes the cyclization activity that produces IGP and AICAR from PRFAR using the ammonia provided by the HisH subunit. This chain is Imidazole glycerol phosphate synthase subunit HisF, found in Cupriavidus taiwanensis (strain DSM 17343 / BCRC 17206 / CCUG 44338 / CIP 107171 / LMG 19424 / R1) (Ralstonia taiwanensis (strain LMG 19424)).